We begin with the raw amino-acid sequence, 684 residues long: 77 kDa membrane protein (684 aa).

An N-terminal signal peptide occupies residues 1–30 (MKFKSLITTTLALGVLASTGANFNNNEASA). MAP repeat units lie at residues 45–154 (GYSK…EDKK), 156–265 (DKAN…ENKA), 266–374 (KRNY…KADR), 375–474 (YVPY…TGTK), 475–584 (AKAD…KKNN), and 586–684 (SNNV…ELKF).

Its subcellular location is the cell membrane. Its function is as follows. Binds various plasma and ECM-proteins. This chain is 77 kDa membrane protein, found in Staphylococcus aureus (strain COL).